A 321-amino-acid polypeptide reads, in one-letter code: Basic peroxidase (321 aa).

Residues M1 to A30 form the signal peptide. At Q31 the chain carries Pyrrolidone carboxylic acid. 4 disulfide bridges follow: C41-C117, C74-C79, C123-C317, and C202-C228. H72 functions as the Proton acceptor in the catalytic mechanism. Ca(2+) is bound by residues D73, V76, G78, D80, and S82. P165 contacts substrate. H195 serves as a coordination point for heme b. Residue T196 participates in Ca(2+) binding. 2 N-linked (GlcNAc...) asparagine glycosylation sites follow: N211 and N221. The Ca(2+) site is built by D241, T244, and D249.

It belongs to the peroxidase family. Classical plant (class III) peroxidase subfamily. Requires heme b as cofactor. Ca(2+) is required as a cofactor. In terms of processing, N-glycosylated. Expressed in tracheary elements, roots, young and old hypocotyls, and stems in the partially glycosylated form and in roots and young hypocotyls in the fully glycosylated form. None of the isoforms is significantly expressed in leaves or cotyledons.

The protein resides in the secreted. It carries out the reaction 2 a phenolic donor + H2O2 = 2 a phenolic radical donor + 2 H2O. In terms of biological role, removal of H(2)O(2), oxidation of toxic reductants, biosynthesis and degradation of lignin, suberization, auxin catabolism, response to environmental stresses such as wounding, pathogen attack and oxidative stress. These functions might be dependent on each isozyme/isoform in each plant tissue. Involved in the synthesis of highly polymerized lignins. This is Basic peroxidase (POD3) from Zinnia elegans (Garden zinnia).